Reading from the N-terminus, the 58-residue chain is Small ribosomal subunit protein bS21 (58 aa).

The disordered stretch occupies residues 30–58; the sequence is SEVRKREHYEKPSVKRKKKSEAARKRKFK. A compositionally biased stretch (basic and acidic residues) spans 31–42; the sequence is EVRKREHYEKPS. Over residues 43–58 the composition is skewed to basic residues; it reads VKRKKKSEAARKRKFK.

Belongs to the bacterial ribosomal protein bS21 family.

The chain is Small ribosomal subunit protein bS21 from Clostridium perfringens (strain ATCC 13124 / DSM 756 / JCM 1290 / NCIMB 6125 / NCTC 8237 / Type A).